Here is a 911-residue protein sequence, read N- to C-terminus: Facilitated trehalose transporter Tret1 (911 aa).

The interval 1–256 is disordered; sequence MSGRDNRGAG…RIGFQQQKAT (256 aa). The Cytoplasmic segment spans residues 1-446; it reads MSGRDNRGAG…VYRPTTNPIY (446 aa). Positions 8 to 19 are enriched in gly residues; it reads GAGGGGGGGGGG. A compositionally biased stretch (basic and acidic residues) spans 32–50; the sequence is KLKEKLTRAGEELGYHRVE. 3 stretches are compositionally biased toward low complexity: residues 51–64, 76–129, and 156–166; these read SNLS…SLDT, AAPQ…QQLR, and QQIHVQQQQQQ. Serine 302, serine 303, and serine 304 each carry phosphoserine. The interval 334–355 is disordered; that stretch reads VLQGSSTDSDEEGDDAEHKRLI. Serine 374 and serine 376 each carry phosphoserine. The tract at residues 380–402 is disordered; the sequence is FLTSRQNFQQQRSISTDSRKSRR. Polar residues predominate over residues 384-395; that stretch reads RQNFQQQRSIST. The chain crosses the membrane as a helical span at residues 447 to 467; it reads IWTQVLAALSVSLGSLVVGFA. The Extracellular portion of the chain corresponds to 468–494; that stretch reads SAYTSPALVSMTNTNLTSFVVTPQAAS. Asparagine 482 carries N-linked (GlcNAc...) asparagine glycosylation. A helical transmembrane segment spans residues 495–515; sequence WVGGIMPLAGLAGGIAGGPFI. The Cytoplasmic portion of the chain corresponds to 516-527; sequence EYLGRRNTILAT. The chain crosses the membrane as a helical span at residues 528-548; it reads AVPFIVSWLLIACAVNVIMVL. Residues 549–551 lie on the Extracellular side of the membrane; sequence CGR. A helical membrane pass occupies residues 552–572; sequence FLAGFCVGIASLSLPVYLGET. Topologically, residues 573–578 are cytoplasmic; the sequence is VQPEVR. A helical transmembrane segment spans residues 579 to 599; it reads GTLGLLPTAFGNIGILLCFVA. The Extracellular portion of the chain corresponds to 600-606; it reads GTYMDWS. Residues 607–627 form a helical membrane-spanning segment; it reads MLAFLGASLPVPFLILMFLIP. At 628 to 690 the chain is on the cytoplasmic side; it reads ETPRWYVSRG…ELLKRSNLKP (63 aa). Residues 691–711 traverse the membrane as a helical segment; it reads LSISLGLMFFQQLSGINAVIF. Residues 712–727 are Extracellular-facing; the sequence is YTVQIFQDAGSTIDGN. The chain crosses the membrane as a helical span at residues 728 to 748; sequence VCTIIVGVVNFAATFIATILI. Over 749–754 the chain is Cytoplasmic; the sequence is DRAGRK. The helical transmembrane segment at 755-775 threads the bilayer; that stretch reads VLLYVSNVMMVLTLFVLGGFF. At 776–794 the chain is on the extracellular side; the sequence is YCKSSGMDTSNVGWLPLSC. Residues 795 to 815 form a helical membrane-spanning segment; it reads FVIYILGFSLGFGPIPWLMMG. Topologically, residues 816 to 821 are cytoplasmic; that stretch reads EILPAK. The chain crosses the membrane as a helical span at residues 822 to 842; that stretch reads IRGSAASVATAFNWSCTFVVT. The Extracellular portion of the chain corresponds to 843-855; it reads KSFQDMIDFMGAH. A helical transmembrane segment spans residues 856–876; the sequence is GAFWMFGAICFIGLFFVIFYV. The Cytoplasmic portion of the chain corresponds to 877-911; sequence PETQGKTLEDIERKMMGRVRRMSSVANIKPLSFNM. Serine 899 and serine 900 each carry phosphoserine.

The protein belongs to the major facilitator superfamily. Sugar transporter (TC 2.A.1.1) family. Trehalose transporter subfamily.

It localises to the cell membrane. In terms of biological role, low-capacity facilitative transporter for trehalose. Does not transport maltose, sucrose or lactose. Mediates the bidirectional transfer of trehalose. Responsible for the transport of trehalose synthesized in the fat body and the incorporation of trehalose into other tissues that require a carbon source, thereby regulating trehalose levels in the hemolymph. The polypeptide is Facilitated trehalose transporter Tret1 (Drosophila virilis (Fruit fly)).